The primary structure comprises 373 residues: GTPase-activating protein gyp10 (373 aa).

One can recognise a Rab-GAP TBC domain in the interval 35–220; it reads FLMKSLRKSV…RLFDFFISSH (186 aa). The chain crosses the membrane as a helical span at residues 343-363; the sequence is IFNGCNMLAAITVIGIGIVAS.

Its subcellular location is the endoplasmic reticulum membrane. Has a role in vesicular trafficking and septation during cytokinesis. The polypeptide is GTPase-activating protein gyp10 (gyp10) (Schizosaccharomyces pombe (strain 972 / ATCC 24843) (Fission yeast)).